The chain runs to 252 residues: RNA-binding protein 2 (252 aa).

Disordered stretches follow at residues 1–34 and 232–252; these read MADG…PSGV and RLQF…RGKR. An RRM domain is found at 152 to 238; that stretch reads STLYVEGLPS…SYLRLQFSRS (87 aa). The span at 242–252 shows a compositional bias: gly residues; that stretch reads RSGGPGPRGKR.

Functionally, probable RNA-binding protein. The protein is RNA-binding protein 2 of Medicago truncatula (Barrel medic).